The primary structure comprises 334 residues: Dipeptide transport ATP-binding protein DppF (334 aa).

The ABC transporter domain maps to Leu13–Leu262. Gly55 to Ser62 is an ATP binding site.

It belongs to the ABC transporter superfamily. As to quaternary structure, the complex is composed of two ATP-binding proteins (DppD and DppF), two transmembrane proteins (DppB and DppC) and a solute-binding protein (DppA). MppA can replace DppA as binding protein for heme and ALA transport.

It is found in the cell inner membrane. The catalysed reaction is a dipeptide(out) + ATP + H2O = a dipeptide(in) + ADP + phosphate + H(+). Functionally, part of the ABC transporter DppABCDF involved in dipeptide transport. Responsible for energy coupling to the transport system. Its function is as follows. When a foreign outer membrane heme receptor is expressed in E.coli, DppABCDF can also transport heme and its precursor, 5-aminolevulinic acid (ALA), from the periplasm into the cytoplasm. This is Dipeptide transport ATP-binding protein DppF (dppF) from Escherichia coli (strain K12).